A 206-amino-acid chain; its full sequence is Peptidyl-tRNA hydrolase (206 aa).

TRNA is bound at residue tyrosine 19. The active-site Proton acceptor is the histidine 24. Residues phenylalanine 70, asparagine 72, and asparagine 118 each coordinate tRNA.

This sequence belongs to the PTH family. As to quaternary structure, monomer.

It is found in the cytoplasm. It carries out the reaction an N-acyl-L-alpha-aminoacyl-tRNA + H2O = an N-acyl-L-amino acid + a tRNA + H(+). Its function is as follows. Hydrolyzes ribosome-free peptidyl-tRNAs (with 1 or more amino acids incorporated), which drop off the ribosome during protein synthesis, or as a result of ribosome stalling. Catalyzes the release of premature peptidyl moieties from peptidyl-tRNA molecules trapped in stalled 50S ribosomal subunits, and thus maintains levels of free tRNAs and 50S ribosomes. The chain is Peptidyl-tRNA hydrolase from Synechococcus sp. (strain CC9902).